The following is a 469-amino-acid chain: D-3-phosphoglycerate dehydrogenase 1 (469 aa).

Ser22, Ser29, and Ser33 each carry phosphoserine. NAD(+)-binding positions include 208–209, Asp228, 285–287, and Asp311; these read HI and ASR. Arg287 is an active-site residue. The active site involves Glu316. The active-site Proton donor is His347. 347–350 contacts NAD(+); the sequence is HIGG. In terms of domain architecture, ACT spans 399–469; sequence RVLYIHQNVP…SAKISIRLLY (71 aa).

Belongs to the D-isomer specific 2-hydroxyacid dehydrogenase family.

The enzyme catalyses (2R)-3-phosphoglycerate + NAD(+) = 3-phosphooxypyruvate + NADH + H(+). It carries out the reaction (R)-2-hydroxyglutarate + NAD(+) = 2-oxoglutarate + NADH + H(+). Its pathway is amino-acid biosynthesis; L-serine biosynthesis; L-serine from 3-phospho-D-glycerate: step 1/3. Catalyzes the reversible oxidation of 3-phospho-D-glycerate to 3-phosphonooxypyruvate, the first step of the phosphorylated L-serine biosynthesis pathway. Also catalyzes the reversible oxidation of 2-hydroxyglutarate to 2-oxoglutarate. This Saccharomyces cerevisiae (strain ATCC 204508 / S288c) (Baker's yeast) protein is D-3-phosphoglycerate dehydrogenase 1 (SER3).